We begin with the raw amino-acid sequence, 226 residues long: UPF0173 metal-dependent hydrolase GTNG_2675 (226 aa).

This sequence belongs to the UPF0173 family.

The sequence is that of UPF0173 metal-dependent hydrolase GTNG_2675 from Geobacillus thermodenitrificans (strain NG80-2).